Consider the following 264-residue polypeptide: Thymidylate synthase (264 aa).

DUMP is bound at residue R21. H51 contacts (6R)-5,10-methylene-5,6,7,8-tetrahydrofolate. Position 126-127 (126-127 (RR)) interacts with dUMP. C146 functions as the Nucleophile in the catalytic mechanism. Residues 166-169 (RSAD), N177, and 207-209 (HLY) contribute to the dUMP site. Residue D169 coordinates (6R)-5,10-methylene-5,6,7,8-tetrahydrofolate. Position 263 (A263) interacts with (6R)-5,10-methylene-5,6,7,8-tetrahydrofolate.

This sequence belongs to the thymidylate synthase family. Bacterial-type ThyA subfamily. In terms of assembly, homodimer.

Its subcellular location is the cytoplasm. The enzyme catalyses dUMP + (6R)-5,10-methylene-5,6,7,8-tetrahydrofolate = 7,8-dihydrofolate + dTMP. It functions in the pathway pyrimidine metabolism; dTTP biosynthesis. In terms of biological role, catalyzes the reductive methylation of 2'-deoxyuridine-5'-monophosphate (dUMP) to 2'-deoxythymidine-5'-monophosphate (dTMP) while utilizing 5,10-methylenetetrahydrofolate (mTHF) as the methyl donor and reductant in the reaction, yielding dihydrofolate (DHF) as a by-product. This enzymatic reaction provides an intracellular de novo source of dTMP, an essential precursor for DNA biosynthesis. This Legionella pneumophila subsp. pneumophila (strain Philadelphia 1 / ATCC 33152 / DSM 7513) protein is Thymidylate synthase.